The following is a 154-amino-acid chain: Interleukin-7 (154 aa).

Positions 1-25 (MFHVSFRYIFGIPPLILVLLPVTSS) are cleaved as a signal peptide. 3 disulfide bridges follow: C27/C145, C58/C133, and C71/C116. N-linked (GlcNAc...) asparagine glycans are attached at residues N94 and N115.

Belongs to the IL-7/IL-9 family. In terms of assembly, interacts with IL7R and CSF2RG. Post-translationally, three disulfide bonds are present.

The protein localises to the secreted. Its function is as follows. Hematopoietic cytokine that plays an essential role in the development, expansion, and survival of naive and memory T-cells and B-cells thereby regulating the number of mature lymphocytes and maintaining lymphoid homeostasis. Mechanistically, exerts its biological effects through a receptor composed of IL7RA subunit and the cytokine receptor common subunit gamma/CSF2RG. Binding to the receptor leads to activation of various kinases including JAK1 or JAK3 depending on the cell type and subsequently propagation of signals through activation of several downstream signaling pathways including the PI3K/Akt/mTOR or the JAK-STAT5. The chain is Interleukin-7 (Il7) from Mus musculus (Mouse).